Consider the following 33-residue polypeptide: uncharacterized protein (33 aa).

Residues 11–31 (LALVIYMSVVLLLMVGVPLLF) form a helical membrane-spanning segment.

It is found in the membrane. This is an uncharacterized protein from Saccharomyces cerevisiae (strain ATCC 204508 / S288c) (Baker's yeast).